The chain runs to 178 residues: MKTELIAQLKKTIITVKDFPKPGILFYDITPILLDPKLFDQVISVMAEVAKKSNADMIASPESRGFLFGVPLANKLKLPFVLVRKQNKLPRATFSASYDLEYGKNNVIEIHQDAIKPNSKVMIVDDLLATAGTVDAISRLVKQAKSEVVSYSFLIRLKDLGGIDKLDQTKPIDYILEY.

Belongs to the purine/pyrimidine phosphoribosyltransferase family. In terms of assembly, homodimer.

The protein resides in the cytoplasm. It carries out the reaction AMP + diphosphate = 5-phospho-alpha-D-ribose 1-diphosphate + adenine. It participates in purine metabolism; AMP biosynthesis via salvage pathway; AMP from adenine: step 1/1. Functionally, catalyzes a salvage reaction resulting in the formation of AMP, that is energically less costly than de novo synthesis. The protein is Adenine phosphoribosyltransferase of Mycoplasmoides gallisepticum (strain R(low / passage 15 / clone 2)) (Mycoplasma gallisepticum).